The chain runs to 476 residues: ATP synthase subunit beta, chloroplastic (476 aa).

155-162 (GGAGVGKT) is an ATP binding site.

Belongs to the ATPase alpha/beta chains family. As to quaternary structure, F-type ATPases have 2 components, CF(1) - the catalytic core - and CF(0) - the membrane proton channel. CF(1) has five subunits: alpha(3), beta(3), gamma(1), delta(1), epsilon(1). CF(0) has four main subunits: a(1), b(1), b'(1) and c(9-12).

Its subcellular location is the plastid. It is found in the chloroplast thylakoid membrane. It catalyses the reaction ATP + H2O + 4 H(+)(in) = ADP + phosphate + 5 H(+)(out). Its function is as follows. Produces ATP from ADP in the presence of a proton gradient across the membrane. The catalytic sites are hosted primarily by the beta subunits. This Emiliania huxleyi (Coccolithophore) protein is ATP synthase subunit beta, chloroplastic.